A 273-amino-acid chain; its full sequence is Bifunctional protein FolD (273 aa).

Residues 155-157, Ser-182, and Ile-223 each bind NADP(+); that span reads GRS.

Belongs to the tetrahydrofolate dehydrogenase/cyclohydrolase family. As to quaternary structure, homodimer.

It catalyses the reaction (6R)-5,10-methylene-5,6,7,8-tetrahydrofolate + NADP(+) = (6R)-5,10-methenyltetrahydrofolate + NADPH. It carries out the reaction (6R)-5,10-methenyltetrahydrofolate + H2O = (6R)-10-formyltetrahydrofolate + H(+). It functions in the pathway one-carbon metabolism; tetrahydrofolate interconversion. Catalyzes the oxidation of 5,10-methylenetetrahydrofolate to 5,10-methenyltetrahydrofolate and then the hydrolysis of 5,10-methenyltetrahydrofolate to 10-formyltetrahydrofolate. This Pseudothermotoga lettingae (strain ATCC BAA-301 / DSM 14385 / NBRC 107922 / TMO) (Thermotoga lettingae) protein is Bifunctional protein FolD.